A 429-amino-acid chain; its full sequence is Phosphoribosylamine--glycine ligase (429 aa).

The ATP-grasp domain maps to 109–316 (KDFLARHQIP…LVDLCLAAID (208 aa)). 135–196 (VREQGAPIVV…EEFLDGEEAS (62 aa)) serves as a coordination point for ATP. The segment at 212–235 (SQDHKRVGDKDTGPNTGGMGAYSP) is disordered. The span at 213-223 (QDHKRVGDKDT) shows a compositional bias: basic and acidic residues. 2 residues coordinate Mg(2+): glutamate 286 and asparagine 288.

This sequence belongs to the GARS family. Mg(2+) is required as a cofactor. It depends on Mn(2+) as a cofactor.

The enzyme catalyses 5-phospho-beta-D-ribosylamine + glycine + ATP = N(1)-(5-phospho-beta-D-ribosyl)glycinamide + ADP + phosphate + H(+). It functions in the pathway purine metabolism; IMP biosynthesis via de novo pathway; N(1)-(5-phospho-D-ribosyl)glycinamide from 5-phospho-alpha-D-ribose 1-diphosphate: step 2/2. The sequence is that of Phosphoribosylamine--glycine ligase from Vibrio parahaemolyticus serotype O3:K6 (strain RIMD 2210633).